We begin with the raw amino-acid sequence, 333 residues long: Low specificity L-threonine aldolase (333 aa).

Lys-197 is modified (N6-(pyridoxal phosphate)lysine).

Belongs to the threonine aldolase family. In terms of assembly, homotetramer. Requires pyridoxal 5'-phosphate as cofactor.

It catalyses the reaction L-threonine = acetaldehyde + glycine. The enzyme catalyses L-allo-threonine = acetaldehyde + glycine. Its function is as follows. Catalyzes the cleavage of L-allo-threonine and L-threonine to glycine and acetaldehyde. L-threo-phenylserine and L-erythro-phenylserine are also good substrates. The protein is Low specificity L-threonine aldolase (ltaE) of Escherichia coli (strain K12).